The following is a 405-amino-acid chain: L-carnitine CoA-transferase (405 aa).

Lys-97 and Arg-104 together coordinate CoA. Asp-169 serves as the catalytic Nucleophile.

Belongs to the CoA-transferase III family. CaiB subfamily. Homodimer.

It localises to the cytoplasm. The enzyme catalyses crotonobetainyl-CoA + (R)-carnitine = crotonobetaine + (R)-carnitinyl-CoA. It catalyses the reaction 4-(trimethylamino)butanoyl-CoA + (R)-carnitine = (R)-carnitinyl-CoA + 4-(trimethylamino)butanoate. It functions in the pathway amine and polyamine metabolism; carnitine metabolism. In terms of biological role, catalyzes the reversible transfer of the CoA moiety from gamma-butyrobetainyl-CoA to L-carnitine to generate L-carnitinyl-CoA and gamma-butyrobetaine. Is also able to catalyze the reversible transfer of the CoA moiety from gamma-butyrobetainyl-CoA or L-carnitinyl-CoA to crotonobetaine to generate crotonobetainyl-CoA. The polypeptide is L-carnitine CoA-transferase (Escherichia coli O139:H28 (strain E24377A / ETEC)).